Consider the following 138-residue polypeptide: Putative pre-16S rRNA nuclease (138 aa).

It belongs to the YqgF nuclease family.

The protein resides in the cytoplasm. Could be a nuclease involved in processing of the 5'-end of pre-16S rRNA. In Clostridium tetani (strain Massachusetts / E88), this protein is Putative pre-16S rRNA nuclease.